Consider the following 365-residue polypeptide: GTPase Obg (365 aa).

The Obg domain maps to Met-1–Leu-159. The OBG-type G domain occupies Ala-160–Gln-334. GTP is bound by residues Gly-166 to Ser-173, Phe-191 to His-195, Asp-213 to Gly-216, Asn-284 to Asp-287, and Ser-315 to Leu-317. Residues Ser-173 and Thr-193 each contribute to the Mg(2+) site.

It belongs to the TRAFAC class OBG-HflX-like GTPase superfamily. OBG GTPase family. Monomer. Mg(2+) is required as a cofactor.

Its subcellular location is the cytoplasm. Functionally, an essential GTPase which binds GTP, GDP and possibly (p)ppGpp with moderate affinity, with high nucleotide exchange rates and a fairly low GTP hydrolysis rate. Plays a role in control of the cell cycle, stress response, ribosome biogenesis and in those bacteria that undergo differentiation, in morphogenesis control. The polypeptide is GTPase Obg (Cupriavidus taiwanensis (strain DSM 17343 / BCRC 17206 / CCUG 44338 / CIP 107171 / LMG 19424 / R1) (Ralstonia taiwanensis (strain LMG 19424))).